Consider the following 456-residue polypeptide: Major facilitator superfamily domain-containing protein 10 (456 aa).

3 helical membrane passes run 25–45, 87–107, and 114–136; these read VIIV…LLLP, VLFG…SAPL, and YLGR…AVWA. An N-linked (GlcNAc...) asparagine glycan is attached at Asn-159. A run of 8 helical transmembrane segments spans residues 179–199, 203–223, 278–298, 311–328, 345–365, 366–386, 403–423, and 424–444; these read AVIG…GAFL, MVPW…FCFL, LVYF…SFLA, KMFF…GTYA, LLLV…TLGL, GLML…TMVS, SLGA…YWLT, and GAQV…LLLW.

The protein belongs to the major facilitator superfamily. As to expression, esxpressed in luminal membrane of renal tubules. Expressed at the surface of eosinophils (at protein level).

It localises to the nucleus inner membrane. It is found in the cell membrane. Its function is as follows. Probable organic anion transporter which may serve as a transporter for some non-steroidal anti-inflammatory drugs (NSAIDs) as well as other organic anions across the luminal membranes of renal proximal tubules at the final excretion step into the urine. The sequence is that of Major facilitator superfamily domain-containing protein 10 (Mfsd10) from Mus musculus (Mouse).